The sequence spans 325 residues: Heat-inducible transcription repressor HrcA (325 aa).

This sequence belongs to the HrcA family.

In terms of biological role, negative regulator of class I heat shock genes (grpE-dnaK-dnaJ and groELS operons). Prevents heat-shock induction of these operons. This is Heat-inducible transcription repressor HrcA from Staphylococcus aureus (strain MRSA252).